The following is a 389-amino-acid chain: 8-amino-7-oxononanoate synthase (389 aa).

Substrate is bound at residue arginine 18. 104–105 provides a ligand contact to pyridoxal 5'-phosphate; the sequence is GY. Residue histidine 129 coordinates substrate. The pyridoxal 5'-phosphate site is built by serine 176, histidine 204, and threonine 232. Lysine 235 carries the N6-(pyridoxal phosphate)lysine modification. Residue threonine 351 participates in substrate binding.

Belongs to the class-II pyridoxal-phosphate-dependent aminotransferase family. BioF subfamily. As to quaternary structure, homodimer. The cofactor is pyridoxal 5'-phosphate.

It catalyses the reaction 6-carboxyhexanoyl-[ACP] + L-alanine + H(+) = (8S)-8-amino-7-oxononanoate + holo-[ACP] + CO2. It functions in the pathway cofactor biosynthesis; biotin biosynthesis. Functionally, catalyzes the decarboxylative condensation of pimeloyl-[acyl-carrier protein] and L-alanine to produce 8-amino-7-oxononanoate (AON), [acyl-carrier protein], and carbon dioxide. This chain is 8-amino-7-oxononanoate synthase, found in Citrifermentans bemidjiense (strain ATCC BAA-1014 / DSM 16622 / JCM 12645 / Bem) (Geobacter bemidjiensis).